We begin with the raw amino-acid sequence, 304 residues long: MTKNPSSDATLPKGIHRSWKLPDKSLGDLWDSIVMDEAIKKQLLSQAIVNFTVRPKVERTVLPLHGVILLVGPPGTGKTSLARGLAHRVAESFSSAKFRLLEVEPHTLTSSAMGKTQRAVADLFSQSIAESAAAGPTIVLLDEVETLAADRAKLSLEANPVDVHRATDAVLVQLDMLAERNPHLLFVATSNFPQAVDSAFLSRCDMVMEVPLPGKDACKQILVDCLNGLAKTFPGIGKLSSAHQFDVCAGECVGLDGRAIRKVVANALAADPQVAIDPNKLSVEHLRSAIRQAKQMRLQGGKQK.

An ATP-binding site is contributed by 75-80 (GTGKTS).

It belongs to the AAA ATPase family. Oligomerizes. Homohexamer. Forms a 1:1:6 CdnD:Cap7:Cap6 complex.

In terms of biological role, regulates complex assembly in a CBASS antivirus system. CBASS (cyclic oligonucleotide-based antiphage signaling system) provides immunity against bacteriophage. The CD-NTase protein synthesizes cyclic nucleotides in response to infection; these serve as specific second messenger signals. The signals activate a diverse range of effectors, leading to bacterial cell death and thus abortive phage infection. A type III-C(AAA) CBASS system. Its function is as follows. Prevents the CdnD:Cap7:Cap8 complex (also called CdnD:HORMA2:HORMA3) from synthesizing 2',3',3'-cyclic AMP-AMP-AMP (cAAA). Binds and disassembles an active CdnD:Cap7:Cap8 complex, inhibiting the complex's ability to synthesize cyclic nucleotide second messengers. An AAA+-ATPase remodeler, in the absence of foreign threat Cap6 probably maintains the Cap7 protein in an open, inactive state. Once activated (presumably by a bacteriophage protein) Cap7 binds to and activates its cognate CD-NTase (CdnD in this bacteria) to synthesize cAAA, a cyclic nucleotide second messenger. cAAA activates the NucC endonuclease which degrades all DNA in the infected cell, causing cell death and abortive phage infection. The polypeptide is CD-NTase-associated protein 6 (Pseudomonas aeruginosa).